Reading from the N-terminus, the 351-residue chain is Calcium release-activated calcium channel protein 1 (351 aa).

Residues 1–21 (MSVWTTANNSGLETPTKSPIT) are compositionally biased toward polar residues. Disordered stretches follow at residues 1–39 (MSVWTTANNSGLETPTKSPITSSVPRAARSSAVITTGNH) and 71–141 (HAHP…EDLH). The Cytoplasmic portion of the chain corresponds to 1-163 (MSVWTTANNS…SRAKLKASSK (163 aa)). Low complexity-rich tracts occupy residues 22–33 (SSVPRAARSSAV) and 80–93 (SNSPTGSGSNSNNS). A compositionally biased stretch (polar residues) spans 94–106 (AGFQRTSISNSLL). A helical membrane pass occupies residues 164–181 (TSALLSGFAMVAMVEVQL). The Extracellular segment spans residues 182–191 (DHDTNVPPGM). The helical transmembrane segment at 192–212 (LIAFAICTTLLVAVHMLALMI) threads the bilayer. The Cytoplasmic segment spans residues 213–248 (STCILPNIETVCNLHSISLVHESPHERLHWYIETAW). A helical membrane pass occupies residues 249–269 (AFSTLLGLILFLLEIAILCWV). At 270-277 (KFYDLSPP) the chain is on the extracellular side. The helical transmembrane segment at 278-298 (AAWSACVVLIPVMIIFMAFAI) threads the bilayer. Over 299–351 (HFYRSLVSHKYEVTVSGIRELEMLKEQMEQDHLEHHNNIRNNGMNYGASGDIV) the chain is Cytoplasmic.

It belongs to the Orai family. As to quaternary structure, hexamer.

The protein localises to the cell membrane. It carries out the reaction Ca(2+)(in) = Ca(2+)(out). Functionally, pore-forming subunit of inward rectifying Ca(2+) release-activated Ca(2+) (CRAC) channels. Assembles in hexameric CRAC channels that mediate Ca(2+) influx upon depletion of endoplasmic reticulum Ca(2+) store and channel activation by Ca(2+) sensor Stim, a process known as store-operated Ca(2+) entry (SOCE). Regulates transcription factor NFAT nuclear import. This chain is Calcium release-activated calcium channel protein 1, found in Drosophila melanogaster (Fruit fly).